We begin with the raw amino-acid sequence, 237 residues long: Demethylmenaquinone methyltransferase (237 aa).

S-adenosyl-L-methionine contacts are provided by residues T62, D80, 102–103 (DA), and S119.

This sequence belongs to the class I-like SAM-binding methyltransferase superfamily. MenG/UbiE family.

It catalyses the reaction a 2-demethylmenaquinol + S-adenosyl-L-methionine = a menaquinol + S-adenosyl-L-homocysteine + H(+). It participates in quinol/quinone metabolism; menaquinone biosynthesis; menaquinol from 1,4-dihydroxy-2-naphthoate: step 2/2. Methyltransferase required for the conversion of demethylmenaquinol (DMKH2) to menaquinol (MKH2). This chain is Demethylmenaquinone methyltransferase, found in Renibacterium salmoninarum (strain ATCC 33209 / DSM 20767 / JCM 11484 / NBRC 15589 / NCIMB 2235).